Consider the following 496-residue polypeptide: Transcription factor CP2 (496 aa).

Positions 61–300 (ENKILPFQYV…SPGFNSSHSS (240 aa)) constitute a Grh/CP2 DB domain. Positions 133–386 (EHQQLEGWRW…LFNALKGRMV (254 aa)) are DNA-binding. Disordered regions lie at residues 238-268 (FKPK…YQPS) and 296-327 (SSHS…LLPT). Positions 241–265 (KGADRKQKTDREKMEKRTPHEKEKY) are enriched in basic and acidic residues.

The protein belongs to the grh/CP2 family. CP2 subfamily. As to quaternary structure, component of the SSP (stage selector protein) complex, which appears to be a heteromer of TFCP2 and 2 copies of NFE4. Expressed in the epiblast at the pre-primitive streak stage. At the primitive streak stage, expressed in the extending primitive streak and in the prospective neural plate. At stages 7 and 8, expressed in the neural folds, somites and in the regressing primitive streak. At stage 12, ubiquitously expressed in the whole embryo.

The protein localises to the nucleus. In terms of biological role, binds the B-response element 5'-CAAGTCCAGGCAAGT-3' of the ENS1/ERNI promoter. May be the major transcription activator thus being essential for its expression. The protein is Transcription factor CP2 (TFCP2) of Gallus gallus (Chicken).